The chain runs to 206 residues: 2,3-bisphosphoglycerate-dependent phosphoglycerate mutase (206 aa).

Substrate is bound by residues 9-16 (RHGQSEWN), 22-23 (TG), Arg61, 88-91 (ERDY), Lys99, 115-116 (RR), and 159-160 (GN). His10 serves as the catalytic Tele-phosphohistidine intermediate. Glu88 (proton donor/acceptor) is an active-site residue.

The protein belongs to the phosphoglycerate mutase family. BPG-dependent PGAM subfamily. In terms of assembly, homodimer.

It catalyses the reaction (2R)-2-phosphoglycerate = (2R)-3-phosphoglycerate. Its pathway is carbohydrate degradation; glycolysis; pyruvate from D-glyceraldehyde 3-phosphate: step 3/5. Its function is as follows. Catalyzes the interconversion of 2-phosphoglycerate and 3-phosphoglycerate. The sequence is that of 2,3-bisphosphoglycerate-dependent phosphoglycerate mutase from Brucella anthropi (strain ATCC 49188 / DSM 6882 / CCUG 24695 / JCM 21032 / LMG 3331 / NBRC 15819 / NCTC 12168 / Alc 37) (Ochrobactrum anthropi).